We begin with the raw amino-acid sequence, 1744 residues long: Myotubularin-related protein 5 (1744 aa).

A uDENN domain is found at 14–150 (DTVAVIVLEE…IRFLTYELVE (137 aa)). A cDENN domain is found at 165 to 304 (ELGFELIPIS…YYNSLHQRLR (140 aa)). A dDENN domain is found at 306 to 412 (VMFTTTSQED…LTRALPRRKH (107 aa)). In terms of domain architecture, GRAM spans 787 to 871 (KGNFDPVLAH…LYSMESFKKL (85 aa)). The Myotubularin phosphatase domain occupies 996–1447 (NAHIRYAVID…PQIHMWPFLA (452 aa)). Positions 1102–1116 (TGSMTGSQQTLHSKA) are enriched in polar residues. A disordered region spans residues 1102-1123 (TGSMTGSQQTLHSKASSNEESS). The Phorbol-ester/DAG-type zinc-finger motif lies at 1540–1590 (IHELTPFTVGARPVQCCYCTNILTRWSKAVHCKKCRIHVHEGCVNRNITIG). One can recognise a PH domain in the interval 1643-1743 (PPLCTGYLSK…WKECIEQVIR (101 aa)).

This sequence belongs to the protein-tyrosine phosphatase family. Non-receptor class myotubularin subfamily.

Functionally, probably acts as an adapter for other myotubularin-like phosphatases. The chain is Myotubularin-related protein 5 from Caenorhabditis elegans.